Reading from the N-terminus, the 203-residue chain is Putative 3-methyladenine DNA glycosylase (203 aa).

It belongs to the DNA glycosylase MPG family.

This chain is Putative 3-methyladenine DNA glycosylase, found in Clostridium beijerinckii (strain ATCC 51743 / NCIMB 8052) (Clostridium acetobutylicum).